We begin with the raw amino-acid sequence, 452 residues long: Asparagine--tRNA ligase (452 aa).

Belongs to the class-II aminoacyl-tRNA synthetase family. As to quaternary structure, homodimer.

It localises to the cytoplasm. The enzyme catalyses tRNA(Asn) + L-asparagine + ATP = L-asparaginyl-tRNA(Asn) + AMP + diphosphate + H(+). The sequence is that of Asparagine--tRNA ligase from Mycoplasma mycoides subsp. mycoides SC (strain CCUG 32753 / NCTC 10114 / PG1).